Here is an 82-residue protein sequence, read N- to C-terminus: RNA-binding protein Hfq (82 aa).

Residues Asp11–Val71 enclose the Sm domain.

Belongs to the Hfq family. As to quaternary structure, homohexamer.

RNA chaperone that binds small regulatory RNA (sRNAs) and mRNAs to facilitate mRNA translational regulation in response to envelope stress, environmental stress and changes in metabolite concentrations. Also binds with high specificity to tRNAs. In Caulobacter vibrioides (strain ATCC 19089 / CIP 103742 / CB 15) (Caulobacter crescentus), this protein is RNA-binding protein Hfq.